The following is an 84-amino-acid chain: Acetylcholine receptor subunit alpha (84 aa).

Disulfide bonds link cysteine 7–cysteine 21 and cysteine 71–cysteine 72. Asparagine 20 carries N-linked (GlcNAc...) asparagine glycosylation.

Belongs to the ligand-gated ion channel (TC 1.A.9) family. Acetylcholine receptor (TC 1.A.9.1) subfamily. Alpha-1/CHRNA1 sub-subfamily. In terms of assembly, one of the alpha chains that assemble within the acetylcholine receptor, a pentamer of two alpha chains, a beta, a delta, and a gamma (in immature muscle) or epsilon (in mature muscle) chains. The muscle heteropentamer composed of alpha-1, beta-1, delta, epsilon subunits interacts with the alpha-conotoxin ImII.

It is found in the postsynaptic cell membrane. It localises to the cell membrane. The enzyme catalyses K(+)(in) = K(+)(out). The catalysed reaction is Na(+)(in) = Na(+)(out). Functionally, upon acetylcholine binding, the AChR responds by an extensive change in conformation that affects all subunits and leads to opening of an ion-conducting channel across the plasma membrane. This is Acetylcholine receptor subunit alpha (CHRNA1) from Felis catus (Cat).